Here is a 796-residue protein sequence, read N- to C-terminus: MEESETKGRISQETDKACVSVERIGSTLLSSFVKKGKEVSNKRNSKQNKRKAEEELCSKSRTKKYSRGWVRCEEMEEEKVKKTRKRKSKRQQKDNKVEVDDSLRLQRRTRYLLIKMKMQQNLIDAYATEGWKGQSREKIRPDKELERARKEILNCKLGLRDAIRQLDLLSSVGSMEEKVIASDGSIHHDHIFCAECNSREAFPDNDIILCDGTCNRAFHQKCLDPPLETESIPPGDQGWFCKFCDCKIEIIDTMNAQIGTHFPVDSNWQDIFNEEASLPIGSEATVNNEADWPSDDSKDDDYDPEMRENGGGNSSNVSGDGGGDNDEESISTSLSLSSDGVALSTGSWEGHRLSNMVEQCETSNEETVCGPRQRRTVDYTQLYYEMFGKDAVLQEQGSEDEDWGPNDRRKRKRESDAGSTLVTMCESSKKDQDVVETLEQSERDSVSVENKGGRRRMFRLPRNAVEKLRQVFAETELPSKAVRDRLAKELSLDPEKVNKWFKNTRYMALRNRKTESVKQPGDSKTVSGGDSGPEAVMENNTETNEVQDTLDDTVPPGFDATNQNILSPCNNNQEEFQQENVSFPSPTDESQQYLEQNDSSFVLVPHEKQSSEISLKTAVEENETESKMMKEPHEELSSEMSLKTAAEEKETESKMIEEPHEELSREMSLKTAVEEKETESKMMEEPHDELNSEMSLSTAVEEKETGSKMTEESHEELSNEMSLEEKETGRKMTEEEELEAVMEMLCRTENKLLDVTQRLDRFKTPKGRKKLGNSSSPLLEEDSVVYVPIAEIKEKR.

2 disordered regions span residues 34–57 and 80–99; these read KKGK…EELC and VKKT…KVEV. Positions 81-90 are enriched in basic residues; that stretch reads KKTRKRKSKR. The PHD-type zinc finger occupies 190–247; that stretch reads HIFCAECNSREAFPDNDIILCDGTCNRAFHQKCLDPPLETESIPPGDQGWFCKFCDCK. Disordered stretches follow at residues 282 to 347, 393 to 422, and 511 to 736; these read SEAT…STGS, LQEQ…STLV, and NRKT…TEEE. Over residues 292–303 the composition is skewed to acidic residues; it reads WPSDDSKDDDYD. Positions 452–511 form a DNA-binding region, homeobox; sequence GGRRRMFRLPRNAVEKLRQVFAETELPSKAVRDRLAKELSLDPEKVNKWFKNTRYMALRN. 2 stretches are compositionally biased toward polar residues: residues 538–547 and 560–569; these read ENNTETNEVQ and ATNQNILSPC. The segment covering 570-580 has biased composition (low complexity); the sequence is NNNQEEFQQEN. Polar residues predominate over residues 581–600; it reads VSFPSPTDESQQYLEQNDSS. Repeat copies occupy residues 605–631, 632–658, 659–685, and 686–712. A 5 X 27 AA tandem repeats region spans residues 605 to 735; that stretch reads PHEKQSSEIS…KETGRKMTEE (131 aa). Composition is skewed to basic and acidic residues over residues 624–636, 645–690, and 700–733; these read TESK…HEEL, AAEE…HDEL, and VEEK…RKMT. Residues 713–735 form a 5; truncated repeat; it reads SHEELSNEMSLEEKETGRKMTEE. Residues 738 to 759 form a leucine-zipper region; that stretch reads LEAVMEMLCRTENKLLDVTQRL.

Belongs to the PHD-associated homeobox family.

It is found in the nucleus. Functionally, specifically binds to the fungal elicitor-responsive DNA element, 5'-CTAATTGTTTA-3', of the gene PR2 promoter. In Arabidopsis thaliana (Mouse-ear cress), this protein is Pathogenesis-related homeodomain protein (PRH).